Consider the following 317-residue polypeptide: Ribosomal RNA small subunit methyltransferase H (317 aa).

S-adenosyl-L-methionine-binding positions include 39–41, aspartate 59, phenylalanine 83, aspartate 104, and glutamine 111; that span reads GGH.

This sequence belongs to the methyltransferase superfamily. RsmH family.

The protein resides in the cytoplasm. The enzyme catalyses cytidine(1402) in 16S rRNA + S-adenosyl-L-methionine = N(4)-methylcytidine(1402) in 16S rRNA + S-adenosyl-L-homocysteine + H(+). Its function is as follows. Specifically methylates the N4 position of cytidine in position 1402 (C1402) of 16S rRNA. The polypeptide is Ribosomal RNA small subunit methyltransferase H (Paraburkholderia phytofirmans (strain DSM 17436 / LMG 22146 / PsJN) (Burkholderia phytofirmans)).